A 2493-amino-acid chain; its full sequence is MKAAAQSNSKNYVFLPFSKRVENLKIDVAHKIPRAADLEDEDVESYFISCLRKWEDLNLSTHYVNFLRSVTPYSQSLPQIVYHQKTIFDLIVQYAREGDSLSLQPILELLTQFARDLALEFASYIDQTLELLCILVQNNELEVVDWSFHAAAYLFKYLRKILAPRLIHTYDILSPLLGKEKQKSHVTRFTAEALSFLCKTVSYENAIEFTGHVLLDLNDHYTPQYHEGVVILFSRIIQGVDTSIHFKGKAFFEILLRSEIYTLPRSKSVIIPVLISTIHHCTSDSFNELEKLIISKITGEPLLYINLFKATLVTRKGSRVSDYPSFFKAYLQIPNLVSWENIESDLSVLIFEISALLFVYPQISDLMPHTVRIISFLQQGPLHLFFSFVDVVKQLNMQRYDSFIKPSLPKFISSLVSDESQKSLAILESVLDNSVPVPVDVASVSLNHFVYCIERLQIVSPSYEDIISLWSSLMIIISSSLGSDEIYKACLLFLRKLEDVSSESVLLGDICGIVLHLLQRKVSRLFLDSSYYKPILDSLLGVFGFLADSKVFLESIRPFFGTSYDFCSSYTSLMDRLINNLSRGLTSLRAASIDLIIALCKSLQKNEVLQSLSLVKKLSELPFDPSTSRDASVLLRNLSAKSSALEKDTRRVVLHALLGLTITRFTPLWPDLSRTAASIVTKEVEDEFLAIIYSWLSLPSPPSGLLGPTDTAVFVKPDLSLEKLPTLEINTFNCPAISYFETSFDECFSKFASSDNYIIGNLLKTNQEDLSNLPTFRSQALRVLNELPEIASRNINVLDNYLFSLQHGFDLNTEWARPDVYLLLGLYSKFTGIKEFVNRDARKEFFLWALTINDPKVQKLVLDIILLYSEEAITTYEENLRNLLDDKKCRDELITFLFVDYADSKIQDIHRPLLMPVVISILYGKMVSKGYGGQKNQAARRSTILSALGNMQVEDLQILVDIMLRPYNGLEVKLNANNNLEIDTGNIPSLTLRRQIGFLTMTEELLLQISSKLSSVAPKILNAVLYNLVVSDDQISSQEAFENFEVKMAYTVRQLSLKVFLLFLKSCSDVDFKPYNVFIYTAFVVPRLDRFADENTQSVSNLMKIFRCWFENEAYLDSVLEFSSHILTALLNTASHTAVKLPVLLYILDTLNLVITHLQSEESESQLREKILANLVMPNITLIFASLSNILKNPQFCNNNRVMDGSVQALSAVSEYMSLDIDSSPLLNLLVSFLRKPNRLVPSNVKSNILVLLCKLLPTNTKWLHASISQTNDFDTIMHLYTSMVDIKARQHLNDLLKIYSTIDDNLIFSSVFVEEINSISKKRLDEPDFERRLSAFTSFNEKHFSLISDLAWLPVLYNFFFYVQDAEELAIRASASLGIKRFIESITMNDASNQFKIDVFVKFIFPFIKNQMKNKNELIRQEFIGLLSYSIKSLTMVDAISDMQPLLYEGDEEANFFNNILHIQLHRRKRAMKRLVNVCAIGVIRSGNISQIFLPLLENFCLGNDTVQTLLDESVITIGEIIKWAHWNQYQAILKRYVSLLKNNAIDQKVVVRLITAVVSALRPLDDAVASYTNSEMNIEQFDGQKKKCVLASSLPSEERFTEVLTNDFFPTLMLYLHIRDESTVTLRVAIALSIVQLVALLPEEEIVLRLTPVLIDTCHILRSRSLESRDATRKALAAISKFLGPKYFSFIISQLQTSLKRGYQLHVLGYTVHYLLLAIEDVYPYGSIDYCMDSLAQIFVDEIFGEVGVEKDSEDYKSNVKEIKGNKSYDSYEIVARISSFDSLSTLLRPVKNVLFETNVPKSLRKVDELCRRLSLGIVANKQSASQSSLIFCYNVYEFVVKEKETVAALKQQENDGYRSAPNFFLENSKKLIRFTFDVLRGVSNKHKELLTARNMAAFVPLIGESLLSSSEEVQISALRFLVLLLPLKIDQVFSGSSVFTSQAVKYIQNSPSTNTELCQASFKFLASILPYENVKIKESTINYLLERVGTDIQEPDRQGVMFSLVRAVIARKIMTPELYKIIDLIRDMMVTNHTKSTRQTCRHLYYSFLLDYPQGKTRLSKQISFILKNLEYEFAPGRESVMELLHLILNNFSDALLKEYHQGIFIALVMVLANDSEPHCREMSAELIKLVYQRADNENFNLIRQLLSHWTSVEKAGKNLVRVSMQLFGLLFETFGFERMEEVHLFTKVFERVLSTTISHPEEATNEWELNYFGLQSWLKLVLADPKKSCEKEFSKIWESMRYLILFKHAWVRLSVSRLFGHFFAIIGDSNFGKLSLGIDGVVFSLDFVTQISNALQAQLRSPVLSEELGMQVAKNLIFLTRWFNSIRSSDDSPFLEIFRRMRKTLKKQTIEEYSINKKYLMQWFASVIHVFSGEELQPVLSEIIAALYRYTELQEAERKSQQELADLVTESLQVLQEKVGATVFARAYQEVRNAAIEVRRERREKRAIEQVVAPEVASRKKIRKNERKRENRKQKTNHHRMVNSIFKNR.

HEAT repeat units lie at residues 265–303 (RSKSVIIPVLISTIHHCTSDSFNELEKLIISKITGEPLL), 402–439 (SFIKPSLPKFISSLVSDESQKSLAILESVLDNSVPVPV), 568–605 (SSYTSLMDRLINNLSRGLTSLRAASIDLIIALCKSLQK), 913–957 (LLMP…EDLQ), 1145–1186 (LYIL…IFAS), 1221–1262 (IDSS…TNTK), 1400–1437 (VFVKFIFPFIKNQMKNKNELIRQEFIGLLSYSIKSLTM), 1605–1645 (VLTN…LLPE), 1647–1687 (EIVL…FLGP), 1896–1933 (RNMAAFVPLIGESLLSSSEEVQISALRFLVLLLPLKID), and 2082–2120 (ESVMELLHLILNNFSDALLKEYHQGIFIALVMVLANDSE). Positions 2393-2454 (RYTELQEAER…ERREKRAIEQ (62 aa)) form a coiled coil. A compositionally biased stretch (basic residues) spans 2463–2485 (RKKIRKNERKRENRKQKTNHHRM). Residues 2463–2493 (RKKIRKNERKRENRKQKTNHHRMVNSIFKNR) are disordered.

Belongs to the UTP20 family. As to quaternary structure, interacts with snoRNA U3. Component of the ribosomal small subunit (SSU) processome composed of at least 40 protein subunits and snoRNA U3.

The protein localises to the nucleus. It is found in the nucleolus. Its function is as follows. Involved in nucleolar processing of pre-18S ribosomal RNA and ribosome assembly. The protein is U3 small nucleolar RNA-associated protein 20 (utp20) of Schizosaccharomyces pombe (strain 972 / ATCC 24843) (Fission yeast).